A 700-amino-acid polypeptide reads, in one-letter code: DNA ligase 2 (700 aa).

Residues Asp42–Asp46 and Ser89–Leu90 contribute to the NAD(+) site. The active-site N6-AMP-lysine intermediate is the Lys122. Positions 143, 177, 303, and 327 each coordinate NAD(+). Zn(2+)-binding residues include Cys421, Cys424, Cys437, and Cys443. A disordered region spans residues Met590–Ala621. The BRCT domain maps to Gly615–Ser700.

The protein belongs to the NAD-dependent DNA ligase family. LigA subfamily. The cofactor is Mg(2+). Mn(2+) serves as cofactor.

It catalyses the reaction NAD(+) + (deoxyribonucleotide)n-3'-hydroxyl + 5'-phospho-(deoxyribonucleotide)m = (deoxyribonucleotide)n+m + AMP + beta-nicotinamide D-nucleotide.. DNA ligase that catalyzes the formation of phosphodiester linkages between 5'-phosphoryl and 3'-hydroxyl groups in double-stranded DNA using NAD as a coenzyme and as the energy source for the reaction. It is essential for DNA replication and repair of damaged DNA. In Streptomyces coelicolor (strain ATCC BAA-471 / A3(2) / M145), this protein is DNA ligase 2.